We begin with the raw amino-acid sequence, 242 residues long: MRPEIVLFGDSITAQSFRSGGWGSALADAYSRKADVVVRGYGGYNTRWALFLLHHIFPLGSSSPPVATTIFFGANDAALKGRTSDRQHVPVEEYTDNVRKIVQHLKKCSPTMLIVLITPPPIDEAGRQSYAESIYGEKAMKEPERTNETTGVYAQHCVALAEELGLRCVNLWSKMQETNDWQKKYLSDGLHLTPEGNGVVFDEVSRVFREAWLSPEEMPFDFPHHSHIDGKNPSKAFEERCL.

Ser11 functions as the Nucleophile in the catalytic mechanism. The interval 223–242 is disordered; sequence PHHSHIDGKNPSKAFEERCL.

It belongs to the 'GDSL' lipolytic enzyme family.

This Arabidopsis thaliana (Mouse-ear cress) protein is GDSL esterase/lipase At5g62930.